An 88-amino-acid chain; its full sequence is Class II hydrophobin 1 (88 aa).

Residues 1–15 (MKFFIATIFATGALA) form the signal peptide. 4 disulfides stabilise this stretch: Cys-19–Cys-69, Cys-29–Cys-59, Cys-30–Cys-42, and Cys-70–Cys-81.

This sequence belongs to the cerato-ulmin hydrophobin family. In terms of assembly, homodimer. Homodimers further self-assemble to form highly ordered films at water-air interfaces through intermolecular interactions.

It is found in the secreted. The protein resides in the cell wall. Functionally, aerial growth, conidiation, and dispersal of filamentous fungi in the environment rely upon a capability of their secreting small amphipathic proteins called hydrophobins (HPBs) with low sequence identity. Class I can self-assemble into an outermost layer of rodlet bundles on aerial cell surfaces, conferring cellular hydrophobicity that supports fungal growth, development and dispersal; whereas Class II form highly ordered films at water-air interfaces through intermolecular interactions but contribute nothing to the rodlet structure. The sequence is that of Class II hydrophobin 1 from Trichoderma asperellum (strain ATCC 204424 / CBS 433.97 / NBRC 101777).